We begin with the raw amino-acid sequence, 732 residues long: Probable zinc transporter cis4 (732 aa).

A run of 12 helical transmembrane segments spans residues Glu-52–Val-72, Phe-79–Tyr-99, Val-111–Leu-131, Tyr-163–Phe-183, Val-189–Val-209, Leu-219–Leu-239, Gly-240–Ile-260, Ile-268–Ile-288, Ile-350–Trp-370, Ala-380–Ala-400, Ile-415–Val-435, and Leu-453–His-473. The interval His-526–Asn-547 is disordered. The next 2 helical transmembrane spans lie at Ile-586–Leu-606 and Phe-615–Ile-635.

This sequence belongs to the cation diffusion facilitator (CDF) transporter (TC 2.A.4) family. SLC30A subfamily. As to quaternary structure, interacts with zrg17.

The protein resides in the endoplasmic reticulum membrane. It localises to the golgi apparatus. It is found in the cis-Golgi network membrane. Functionally, probable zinc transporter involved in Golgi membrane trafficking through the regulation of zinc homeostasis. This chain is Probable zinc transporter cis4 (cis4), found in Schizosaccharomyces pombe (strain 972 / ATCC 24843) (Fission yeast).